The chain runs to 397 residues: Tryptophan synthase beta chain (397 aa).

K90 is subject to N6-(pyridoxal phosphate)lysine.

It belongs to the TrpB family. In terms of assembly, tetramer of two alpha and two beta chains. Pyridoxal 5'-phosphate is required as a cofactor.

The enzyme catalyses (1S,2R)-1-C-(indol-3-yl)glycerol 3-phosphate + L-serine = D-glyceraldehyde 3-phosphate + L-tryptophan + H2O. It participates in amino-acid biosynthesis; L-tryptophan biosynthesis; L-tryptophan from chorismate: step 5/5. Its function is as follows. The beta subunit is responsible for the synthesis of L-tryptophan from indole and L-serine. The sequence is that of Tryptophan synthase beta chain from Nitrosomonas europaea (strain ATCC 19718 / CIP 103999 / KCTC 2705 / NBRC 14298).